Consider the following 202-residue polypeptide: Molybdenum cofactor guanylyltransferase (202 aa).

GTP is bound by residues 9–11 (LAG), lysine 22, aspartate 70, and aspartate 96. Aspartate 96 contacts Mg(2+).

Belongs to the MobA family. In terms of assembly, monomer. Requires Mg(2+) as cofactor.

It is found in the cytoplasm. It catalyses the reaction Mo-molybdopterin + GTP + H(+) = Mo-molybdopterin guanine dinucleotide + diphosphate. In terms of biological role, transfers a GMP moiety from GTP to Mo-molybdopterin (Mo-MPT) cofactor (Moco or molybdenum cofactor) to form Mo-molybdopterin guanine dinucleotide (Mo-MGD) cofactor. This is Molybdenum cofactor guanylyltransferase from Desulfosudis oleivorans (strain DSM 6200 / JCM 39069 / Hxd3) (Desulfococcus oleovorans).